The chain runs to 437 residues: Elongation factor 1-gamma (437 aa).

Alanine 2 bears the N-acetylalanine mark. In terms of domain architecture, GST N-terminal spans alanine 2 to serine 87. The region spanning threonine 88 to phenylalanine 216 is the GST C-terminal domain. N6-acetyllysine occurs at positions 147 and 212. The span at phenylalanine 221–alanine 254 shows a compositional bias: basic and acidic residues. The tract at residues phenylalanine 221 to glutamine 268 is disordered. Residue lysine 253 forms a Glycyl lysine isopeptide (Lys-Gly) (interchain with G-Cter in SUMO1) linkage. One can recognise an EF-1-gamma C-terminal domain in the interval alanine 276–lysine 437. Lysine 285 is covalently cross-linked (Glycyl lysine isopeptide (Lys-Gly) (interchain with G-Cter in SUMO2)). The residue at position 401 (lysine 401) is an N6-acetyllysine. At lysine 434 the chain carries N6-acetyllysine; alternate. Lysine 434 is modified (N6-malonyllysine; alternate).

As to quaternary structure, EF-1 is composed of four subunits: alpha, beta, delta, and gamma.

In terms of biological role, probably plays a role in anchoring the complex to other cellular components. The sequence is that of Elongation factor 1-gamma (EEF1G) from Macaca fascicularis (Crab-eating macaque).